A 502-amino-acid polypeptide reads, in one-letter code: Neuronal acetylcholine receptor subunit alpha-7 (502 aa).

Positions 1–22 (MRCSPGGVWLALAASLLHVSLQ) are cleaved as a signal peptide. Residues 23–233 (GEFQRKLYKE…VTMRRRTLYY (211 aa)) lie on the Extracellular side of the membrane. Ca(2+) is bound by residues Arg-42 and Val-44. Asn-46, Asn-90, and Asn-133 each carry an N-linked (GlcNAc...) asparagine glycan. A disulfide bond links Cys-150 and Cys-164. Ser-172 and Tyr-210 together coordinate Ca(2+). Cys-212 and Cys-213 are joined by a disulfide. 3 helical membrane-spanning segments follow: residues 234-254 (GLNL…VFLL), 259-279 (GEKI…MLLV), and 292-315 (LIAQ…VIVL). Residues 260–267 (EKISLGIT) are essential for TMEM35A/NACHO-mediated proper subunit assembly and trafficking to cell membrane. At 316–466 (QYHHHDPDGG…CSEWKFAACV (151 aa)) the chain is on the cytoplasmic side. Residues 467-489 (VDRLCLMAFSVFTIICTIGILMS) traverse the membrane as a helical segment.

This sequence belongs to the ligand-gated ion channel (TC 1.A.9) family. Acetylcholine receptor (TC 1.A.9.1) subfamily. Alpha-7/CHRNA7 sub-subfamily. In terms of assembly, homopentamer. Can also form heteropentamers with CHRNB2, mainly found in basal forebrain cholinergic neurons. Interacts with RIC3; which is required for proper folding and assembly. Interacts with LYPD6. Interacts with CANX. Post-translationally, glycosylations at Asn-46, Asn-90 and Asn-133 are essential for TMEM35A/NACHO-mediated proper subunit assembly and trafficking to the cell membrane. Expressed in neuronal cells. Expressed in macrophages (at protein level).

It localises to the postsynaptic cell membrane. The protein localises to the cell membrane. It carries out the reaction Ca(2+)(in) = Ca(2+)(out). It catalyses the reaction K(+)(in) = K(+)(out). The enzyme catalyses Na(+)(in) = Na(+)(out). The catalysed reaction is choline(out) = choline(in). It carries out the reaction NH4(+)(in) = NH4(+)(out). It catalyses the reaction L-arginine(in) = L-arginine(out). The enzyme catalyses guanidine(out) = guanidine(in). Activated by a myriad of ligands such as acetylcholine, cytisine, nicotine, choline and epibatidine. Oligomeric amyloid-beta protein 42 activates specifially CHRNA7:CHRNB2 nAchRs. Activity is modulated by positive allosteric modulators (PAMs), such as flavonoids, with a wide range of chemical diversity, pharmacological sensitivity and efficacy. AChR activity is inhibited by the antagonists alpha-conotoxons RgIA, ImI and ImII, small disulfide-constrained peptides from cone snails. Alpha-conotoxin PnIC selectively inhibits CHRNA7:CHRNB2 over CHRNA7 homopentamer. Component of neuronal acetylcholine receptors (nAChRs) that function as pentameric, ligand-gated cation channels with high calcium permeability among other activities. nAChRs are excitatory neurotrasnmitter receptors formed by a collection of nAChR subunits known to mediate synaptic transmission in the nervous system and the neuromuscular junction. Each nAchR subunit confers differential attributes to channel properties, including activation, deactivation and desensitization kinetics, pH sensitivity, cation permeability, and binding to allosteric modulators. CHRNA7 forms homopentameric neuronal acetylcholine receptors abundantly expressed in the central nervous system, characterized by fast desensitization and high calcium permeability. Also forms heteropentamers with CHRNB2, mainly expressed in basal forebrain cholinergic neurons. Involved in the modulation of calcium-dependent signaling pathways and influences the release of neurotransmitters, including dopamine, glutamate and GABA. Also expressed in non-neuronal cells such as immune cells like lymphocytes, monocytes and macrophages. In T cells, activation induces metabotropic signaling that results in an increase of intracellular Ca2+ concentrations, independent of ionotropic receptor functions. In macrophages, required for acetylcholine-mediated inhibition of TNF and other inflammatory cytokine release. Once activated by acetylcholine, nicotine or other agonists, selectively inhibits production of pro-inflammatory cytokines while leaving anti-inflammatory cytokines undisturbed. Stimulates the cholinergic anti-inflammatory pathway, controlling inflammation by inhibiting NFKB nuclear translocation and activating the JAK2-STAT3 pathway, independently of ion channel activity. Also expressed in the urothelium where it modulates reflex bladder activity by increasing intracellular calcium through internal stores and decreasing basal ATP release. The sequence is that of Neuronal acetylcholine receptor subunit alpha-7 from Homo sapiens (Human).